The primary structure comprises 288 residues: 4-diphosphocytidyl-2-C-methyl-D-erythritol kinase (288 aa).

K13 is an active-site residue. 96–106 (PMGGGIGGGSS) lines the ATP pocket. D138 is a catalytic residue.

This sequence belongs to the GHMP kinase family. IspE subfamily.

It catalyses the reaction 4-CDP-2-C-methyl-D-erythritol + ATP = 4-CDP-2-C-methyl-D-erythritol 2-phosphate + ADP + H(+). The protein operates within isoprenoid biosynthesis; isopentenyl diphosphate biosynthesis via DXP pathway; isopentenyl diphosphate from 1-deoxy-D-xylulose 5-phosphate: step 3/6. Functionally, catalyzes the phosphorylation of the position 2 hydroxy group of 4-diphosphocytidyl-2C-methyl-D-erythritol. The chain is 4-diphosphocytidyl-2-C-methyl-D-erythritol kinase from Aliivibrio fischeri (strain ATCC 700601 / ES114) (Vibrio fischeri).